Reading from the N-terminus, the 433-residue chain is MNKLRLFRSFFAFLLPFGMATGAAHGALTVEIVGGAAQQIPIAVVPFAQQGVIPGQQDTIANVIGADLRRSGLFRVLETRGVANQPSDISQVNYQDWAAIQAQALTIGNIETLPGNRLKVSFRLLDVYKQSQLVGMEYNITPSQLRLTAHKIADVIYQKLTGEQGVFATRIAYVSKSGGRYALQVADSDGYNPQTVVSSAEPIISPVWSPDGTKLAYVSFEKKKPIIYVQSLVSGQRTVLANFKGNNSAPAWSPDGKRLAIVLTHAANSQIYSINADGTGLQQLTRTTAIDTEPTWSPDGRYIYFTSDRGGSPQIYRMPSSGGEASRMTFEGSYVVSPRLSPDGKSLAYIRRDGGQFRVALQDLQTGQVQVLSDGPKDESPSFAPNGRMLLHATRVGGRGALAAVSADGRVKQRLSESGGDVREPAWGPIISQ.

An N-terminal signal peptide occupies residues methionine 1 to glycine 26.

Belongs to the TolB family. In terms of assembly, the Tol-Pal system is composed of five core proteins: the inner membrane proteins TolA, TolQ and TolR, the periplasmic protein TolB and the outer membrane protein Pal. They form a network linking the inner and outer membranes and the peptidoglycan layer.

It localises to the periplasm. Part of the Tol-Pal system, which plays a role in outer membrane invagination during cell division and is important for maintaining outer membrane integrity. This is Tol-Pal system protein TolB from Methylobacillus flagellatus (strain ATCC 51484 / DSM 6875 / VKM B-1610 / KT).